Here is a 375-residue protein sequence, read N- to C-terminus: tRNA-specific 2-thiouridylase MnmA (375 aa).

ATP is bound by residues glycine 12–serine 19 and methionine 38. Residues asparagine 98–aspartate 100 form an interaction with target base in tRNA region. Cysteine 103 functions as the Nucleophile in the catalytic mechanism. A disulfide bridge connects residues cysteine 103 and cysteine 200. Residue glycine 127 coordinates ATP. The segment at lysine 150 to glutamine 152 is interaction with tRNA. Cysteine 200 functions as the Cysteine persulfide intermediate in the catalytic mechanism. The interaction with tRNA stretch occupies residues arginine 312–tyrosine 313.

Belongs to the MnmA/TRMU family.

The protein resides in the cytoplasm. The enzyme catalyses S-sulfanyl-L-cysteinyl-[protein] + uridine(34) in tRNA + AH2 + ATP = 2-thiouridine(34) in tRNA + L-cysteinyl-[protein] + A + AMP + diphosphate + H(+). Catalyzes the 2-thiolation of uridine at the wobble position (U34) of tRNA, leading to the formation of s(2)U34. The sequence is that of tRNA-specific 2-thiouridylase MnmA from Lactobacillus helveticus (strain DPC 4571).